The following is a 239-amino-acid chain: Enolase-phosphatase E1 (239 aa).

The Mg(2+) site is built by Asp-13 and Glu-15. Substrate-binding positions include 133–134 (SS) and Lys-170. Asp-196 contributes to the Mg(2+) binding site.

It belongs to the HAD-like hydrolase superfamily. MasA/MtnC family. In terms of assembly, monomer. Requires Mg(2+) as cofactor.

It localises to the cytoplasm. The protein localises to the nucleus. The catalysed reaction is 5-methylsulfanyl-2,3-dioxopentyl phosphate + H2O = 1,2-dihydroxy-5-(methylsulfanyl)pent-1-en-3-one + phosphate. It participates in amino-acid biosynthesis; L-methionine biosynthesis via salvage pathway; L-methionine from S-methyl-5-thio-alpha-D-ribose 1-phosphate: step 3/6. The protein operates within amino-acid biosynthesis; L-methionine biosynthesis via salvage pathway; L-methionine from S-methyl-5-thio-alpha-D-ribose 1-phosphate: step 4/6. Its function is as follows. Bifunctional enzyme that catalyzes the enolization of 2,3-diketo-5-methylthiopentyl-1-phosphate (DK-MTP-1-P) into the intermediate 2-hydroxy-3-keto-5-methylthiopentenyl-1-phosphate (HK-MTPenyl-1-P), which is then dephosphorylated to form the acireductone 1,2-dihydroxy-3-keto-5-methylthiopentene (DHK-MTPene). This chain is Enolase-phosphatase E1, found in Chaetomium globosum (strain ATCC 6205 / CBS 148.51 / DSM 1962 / NBRC 6347 / NRRL 1970) (Soil fungus).